The chain runs to 314 residues: Dihydroorotate dehydrogenase (fumarate) (314 aa).

Residues Lys46, Asn70–Leu74, and Asn130 each bind substrate. Lys46 to Ser47 provides a ligand contact to FMN. Asn130 lines the FMN pocket. Active-site nucleophile residues include Ser132 and Cys133. Residues Lys167 and Ile195 each coordinate FMN. Asn196–Ser197 contacts substrate. Residues Gly224, Gly252 to Gly253, and Gly274 to Thr275 contribute to the FMN site.

It belongs to the dihydroorotate dehydrogenase family. Type 1 subfamily. As to quaternary structure, homodimer. FMN serves as cofactor.

The protein resides in the cytoplasm. It carries out the reaction (S)-dihydroorotate + fumarate = orotate + succinate. It functions in the pathway pyrimidine metabolism; UMP biosynthesis via de novo pathway. Functionally, catalyzes the conversion of dihydroorotate to orotate with fumarate as the electron acceptor. The protein is Dihydroorotate dehydrogenase (fumarate) (URA1) of Saccharomyces mikatae (Yeast).